Consider the following 456-residue polypeptide: Transcription factor bHLH62 (456 aa).

A compositionally biased stretch (polar residues) spans 159–185 (RTNSPFPINNEPPITTNEKMPRVSSSP). The segment at 159–254 (RTNSPFPINN…KTKSIDPYKD (96 aa)) is disordered. Positions 223–254 (KEIEEKEDSDPKRCKKSEENGDKTKSIDPYKD) are enriched in basic and acidic residues. The bHLH domain occupies 264–314 (QATDSHSLAERVRREKISERMKLLQDLVPGCNKVTGKALMLDEIINYVQSL).

In terms of assembly, homodimer. As to expression, expressed constitutively in roots, leaves, stems, and flowers.

It localises to the nucleus. In Arabidopsis thaliana (Mouse-ear cress), this protein is Transcription factor bHLH62 (BHLH62).